The following is a 328-amino-acid chain: Formimidoylglutamase (328 aa).

Mn(2+) is bound by residues His133, Asp159, His161, Asp163, Asp253, and Asp255.

Belongs to the arginase family. Mn(2+) serves as cofactor.

It catalyses the reaction N-formimidoyl-L-glutamate + H2O = formamide + L-glutamate. Its pathway is amino-acid degradation; L-histidine degradation into L-glutamate; L-glutamate from N-formimidoyl-L-glutamate (hydrolase route): step 1/1. Functionally, catalyzes the conversion of N-formimidoyl-L-glutamate to L-glutamate and formamide. This is Formimidoylglutamase from Streptococcus pyogenes serotype M18 (strain MGAS8232).